Here is a 102-residue protein sequence, read N- to C-terminus: Small ribosomal subunit protein uS10 (102 aa).

The protein belongs to the universal ribosomal protein uS10 family. In terms of assembly, part of the 30S ribosomal subunit.

Its function is as follows. Involved in the binding of tRNA to the ribosomes. This chain is Small ribosomal subunit protein uS10, found in Clostridium botulinum (strain ATCC 19397 / Type A).